We begin with the raw amino-acid sequence, 235 residues long: 2-C-methyl-D-erythritol 4-phosphate cytidylyltransferase (235 aa).

Belongs to the IspD/TarI cytidylyltransferase family. IspD subfamily. In terms of assembly, homodimer.

It carries out the reaction 2-C-methyl-D-erythritol 4-phosphate + CTP + H(+) = 4-CDP-2-C-methyl-D-erythritol + diphosphate. It participates in isoprenoid biosynthesis; isopentenyl diphosphate biosynthesis via DXP pathway; isopentenyl diphosphate from 1-deoxy-D-xylulose 5-phosphate: step 2/6. Its function is as follows. Catalyzes the formation of 4-diphosphocytidyl-2-C-methyl-D-erythritol from CTP and 2-C-methyl-D-erythritol 4-phosphate (MEP). This chain is 2-C-methyl-D-erythritol 4-phosphate cytidylyltransferase, found in Serratia proteamaculans (strain 568).